We begin with the raw amino-acid sequence, 58 residues long: Small ribosomal subunit protein bS21 (58 aa).

The interval 25 to 58 (KAGTLQEARKREHYEKPSVKRKRKSEAARKRKKI) is disordered. Basic and acidic residues predominate over residues 31–42 (EARKREHYEKPS). A compositionally biased stretch (basic residues) spans 43–58 (VKRKRKSEAARKRKKI).

Belongs to the bacterial ribosomal protein bS21 family.

The sequence is that of Small ribosomal subunit protein bS21 from Streptococcus thermophilus (strain ATCC BAA-491 / LMD-9).